Reading from the N-terminus, the 410-residue chain is MVIIWWFWSLLAICASDSFRDQAVAIMRTTPVIDGHNDLPWQLLNLFNNQLLRPDADLNKLAQTHTNIPKLKAGFVGGQFWSAYMPCDTQNKDAVKRILEQMDVIHRMCQLYPETFMCVTNSSDILQAFRRGKVASLIGVEGGHLIDSSLGVLRTLYHLGMRYLTLTHNCNTPWADNWLVDRGDDEAESHGLSPFGKRLLNEMNRLGVMIDLSHVSVATMKDALQISRAPVIFSHSSAYSLCPHRRNVPDDVLQLVKNTSSLVMVNFFSNFVSCSDSATLPQVADHLDHIKKVAGAGAVGLGGDYDGVTMLPVGLEDVSKYPDLIAELLRRNWTETEVRGLLADNLIRVFSEVELVSNNMQSPEEVPITLKELDGSCRTYYGYSQAHSIHLQTGALVASLASLLFRLHLL.

The signal sequence occupies residues 1 to 16 (MVIIWWFWSLLAICAS). The Zn(2+) site is built by His36 and Asp38. Cys87 and Cys170 are oxidised to a cystine. Asn121 is a glycosylation site (N-linked (GlcNAc...) asparagine). Position 141 (Glu141) interacts with Zn(2+). His168 lines the substrate pocket. Zn(2+) is bound by residues His214 and His235. Residues Cys242 and Cys274 are joined by a disulfide bond. Residue Arg246 participates in substrate binding. N-linked (GlcNAc...) asparagine glycosylation is present at Asn258. Substrate is bound at residue Asp304. N-linked (GlcNAc...) asparagine glycosylation is present at Asn332. A lipid anchor (GPI-anchor amidated serine) is attached at Ser384. The propeptide at 385–410 (QAHSIHLQTGALVASLASLLFRLHLL) is removed in mature form.

It belongs to the metallo-dependent hydrolases superfamily. Peptidase M19 family. In terms of assembly, homodimer; disulfide-linked. It depends on Zn(2+) as a cofactor. As to expression, expressed in heart, lung, skeletal muscle, kidney, liver, and testis. Not detected in brain and spleen.

The protein localises to the apical cell membrane. Its subcellular location is the cell projection. The protein resides in the microvillus membrane. The enzyme catalyses an L-aminoacyl-L-amino acid + H2O = 2 an L-alpha-amino acid. It catalyses the reaction leukotriene D4 + H2O = leukotriene E4 + glycine. The catalysed reaction is L-cystine-bis-glycine + 2 H2O = L-cystine + 2 glycine. It carries out the reaction a beta-lactam + H2O = a substituted beta-amino acid. The enzyme catalyses glycyldehydrophenylalanine + H2O = 2,3-didehydrophenylalanine + glycine. Inhibited by L-penicillamine. Inhibited by cilastatin. In terms of biological role, hydrolyzes a wide range of dipeptides including the conversion of leukotriene D4 to leukotriene E4. Hydrolyzes cystinyl-bis-glycine (cys-bis-gly) formed during glutathione degradation. Also possesses beta lactamase activity and hydrolytically inactivates beta-lactam antibiotics. Independently of its dipeptidase activity, acts as an adhesion receptor for neutrophil recruitment from bloodstream into inflamed lungs and liver. The protein is Dipeptidase 1 (Dpep1) of Mus musculus (Mouse).